The chain runs to 622 residues: Elongation factor 4 (622 aa).

One can recognise a tr-type G domain in the interval 17–201; it reads ALIRNFCIIA…KVVAEVPAPV (185 aa). Residues 29–34 and 148–151 contribute to the GTP site; these read DHGKST and NKID.

The protein belongs to the TRAFAC class translation factor GTPase superfamily. Classic translation factor GTPase family. LepA subfamily.

Its subcellular location is the cell membrane. It carries out the reaction GTP + H2O = GDP + phosphate + H(+). Required for accurate and efficient protein synthesis under certain stress conditions. May act as a fidelity factor of the translation reaction, by catalyzing a one-codon backward translocation of tRNAs on improperly translocated ribosomes. Back-translocation proceeds from a post-translocation (POST) complex to a pre-translocation (PRE) complex, thus giving elongation factor G a second chance to translocate the tRNAs correctly. Binds to ribosomes in a GTP-dependent manner. The sequence is that of Elongation factor 4 from Streptomyces coelicolor (strain ATCC BAA-471 / A3(2) / M145).